Reading from the N-terminus, the 82-residue chain is MKLTCVMIVAVLFLTAWTLVMADDSNNGLANLFSKLRDEMEDPEGSKLEKKDCQEKWDYCPVPFLGSRYCCDGFICPSFFCA.

The first 19 residues, 1-19 (MKLTCVMIVAVLFLTAWTL), serve as a signal peptide directing secretion. The propeptide occupies 20 to 51 (VMADDSNNGLANLFSKLRDEMEDPEGSKLEKK). 3 disulfide bridges follow: Cys-53/Cys-71, Cys-60/Cys-76, and Cys-70/Cys-81. Ala-82 carries the alanine amide; partial modification.

It belongs to the O1 superfamily. In terms of tissue distribution, expressed by the venom duct.

The protein localises to the secreted. Its function is as follows. Omega-conotoxins act at presynaptic membranes, they bind and block voltage-gated calcium channels (Cav). The protein is Conotoxin Tx6.6 of Conus textile (Cloth-of-gold cone).